A 181-amino-acid polypeptide reads, in one-letter code: ATP-dependent protease subunit HslV (181 aa).

The active site involves Thr-9. Na(+)-binding residues include Ala-166, Cys-169, and Thr-172.

It belongs to the peptidase T1B family. HslV subfamily. A double ring-shaped homohexamer of HslV is capped on each side by a ring-shaped HslU homohexamer. The assembly of the HslU/HslV complex is dependent on binding of ATP.

The protein resides in the cytoplasm. The enzyme catalyses ATP-dependent cleavage of peptide bonds with broad specificity.. Allosterically activated by HslU binding. Protease subunit of a proteasome-like degradation complex believed to be a general protein degrading machinery. This chain is ATP-dependent protease subunit HslV, found in Staphylococcus aureus (strain JH1).